The sequence spans 506 residues: Maturase K (506 aa).

Belongs to the intron maturase 2 family. MatK subfamily.

Its subcellular location is the plastid. It localises to the chloroplast. Usually encoded in the trnK tRNA gene intron. Probably assists in splicing its own and other chloroplast group II introns. The sequence is that of Maturase K from Trifolium subterraneum (Subterranean clover).